A 283-amino-acid chain; its full sequence is Probable endonuclease 4 (283 aa).

Zn(2+) is bound by residues histidine 69, histidine 109, glutamate 145, aspartate 179, histidine 182, histidine 216, aspartate 229, histidine 231, and glutamate 261.

This sequence belongs to the AP endonuclease 2 family. Zn(2+) serves as cofactor.

It catalyses the reaction Endonucleolytic cleavage to 5'-phosphooligonucleotide end-products.. Endonuclease IV plays a role in DNA repair. It cleaves phosphodiester bonds at apurinic or apyrimidinic (AP) sites, generating a 3'-hydroxyl group and a 5'-terminal sugar phosphate. The polypeptide is Probable endonuclease 4 (Campylobacter concisus (strain 13826)).